A 157-amino-acid chain; its full sequence is 6,7-dimethyl-8-ribityllumazine synthase (157 aa).

Residues phenylalanine 22, 57–59 (AYE), and 81–83 (TVI) contribute to the 5-amino-6-(D-ribitylamino)uracil site. 86–87 (GT) contributes to the (2S)-2-hydroxy-3-oxobutyl phosphate binding site. The active-site Proton donor is histidine 89. Phenylalanine 114 is a 5-amino-6-(D-ribitylamino)uracil binding site. Arginine 128 serves as a coordination point for (2S)-2-hydroxy-3-oxobutyl phosphate.

The protein belongs to the DMRL synthase family. In terms of assembly, forms an icosahedral capsid composed of 60 subunits, arranged as a dodecamer of pentamers.

The catalysed reaction is (2S)-2-hydroxy-3-oxobutyl phosphate + 5-amino-6-(D-ribitylamino)uracil = 6,7-dimethyl-8-(1-D-ribityl)lumazine + phosphate + 2 H2O + H(+). It functions in the pathway cofactor biosynthesis; riboflavin biosynthesis; riboflavin from 2-hydroxy-3-oxobutyl phosphate and 5-amino-6-(D-ribitylamino)uracil: step 1/2. Functionally, catalyzes the formation of 6,7-dimethyl-8-ribityllumazine by condensation of 5-amino-6-(D-ribitylamino)uracil with 3,4-dihydroxy-2-butanone 4-phosphate. This is the penultimate step in the biosynthesis of riboflavin. This chain is 6,7-dimethyl-8-ribityllumazine synthase, found in Haemophilus influenzae (strain ATCC 51907 / DSM 11121 / KW20 / Rd).